The following is a 130-amino-acid chain: DNA-directed RNA polymerase subunit omega (130 aa).

Positions 109–130 (EEELLKGLEGLAPPEEQPEEDE) are disordered.

The protein belongs to the RNA polymerase subunit omega family. In terms of assembly, the RNAP catalytic core consists of 2 alpha, 1 beta, 1 beta' and 1 omega subunit. When a sigma factor is associated with the core the holoenzyme is formed, which can initiate transcription.

The enzyme catalyses RNA(n) + a ribonucleoside 5'-triphosphate = RNA(n+1) + diphosphate. Functionally, promotes RNA polymerase assembly. Latches the N- and C-terminal regions of the beta' subunit thereby facilitating its interaction with the beta and alpha subunits. The sequence is that of DNA-directed RNA polymerase subunit omega from Rhodopseudomonas palustris (strain BisA53).